A 379-amino-acid polypeptide reads, in one-letter code: Protein COS2 (379 aa).

Topologically, residues 1–72 (MKENELKNEK…WKLSNNCIYP (72 aa)) are cytoplasmic. The helical transmembrane segment at 73-93 (LIVSLLVLFLGPIFVLVICGL) threads the bilayer. The Extracellular segment spans residues 94-254 (SRKRSLSKQL…FLCCIYVSRG (161 aa)). Residues 255-275 (MCLLLRTLYLGWILFMLVQGF) form a helical membrane-spanning segment. Residues 276-379 (QNIRVLIMSM…QLSRSEVLLV (104 aa)) are Cytoplasmic-facing.

The protein belongs to the DUP/COS family.

It is found in the membrane. In Saccharomyces cerevisiae (strain ATCC 204508 / S288c) (Baker's yeast), this protein is Protein COS2 (COS2).